Here is a 248-residue protein sequence, read N- to C-terminus: MLYNPLEQFTVNKIISLYTVYYSMSLTNSSLYFIIAAIISFFIFKYSANIPYVSLINKNNYSILTESLYKTILKMVKEQIGDKYTIYMPLIFSLFIIILVSNLVGLIPYGFSPTALFALPLGLSVTIIISVTVIGFVKYHLKYFSVLLPSGTPLGLVPLLLVVELLSYIARAFSLGIRLAANITSGHILLNIISGFLFKTSGIALLFVIIPFTLFIALTGLELIVAILQAYVWSILTCIYIKDSLILH.

The propeptide at 1-3 is removed in mature form; it reads MLY. A run of 7 helical transmembrane segments spans residues 24-44, 86-106, 117-137, 146-166, 183-203, 205-225, and 227-247; these read MSLTNSSLYFIIAAIISFFIF, IYMPLIFSLFIIILVSNLVGL, FALPLGLSVTIIISVTVIGFV, VLLPSGTPLGLVPLLLVVELL, ITSGHILLNIISGFLFKTSGI, LLFVIIPFTLFIALTGLELIV, and ILQAYVWSILTCIYIKDSLIL.

The protein belongs to the ATPase A chain family. In terms of assembly, F-type ATPases have 2 components, CF(1) - the catalytic core - and CF(0) - the membrane proton channel. CF(1) has five subunits: alpha(3), beta(3), gamma(1), delta(1), epsilon(1). CF(0) has three main subunits: a, b and c.

It localises to the mitochondrion inner membrane. In terms of biological role, mitochondrial membrane ATP synthase (F(1)F(0) ATP synthase or Complex V) produces ATP from ADP in the presence of a proton gradient across the membrane which is generated by electron transport complexes of the respiratory chain. F-type ATPases consist of two structural domains, F(1) - containing the extramembraneous catalytic core and F(0) - containing the membrane proton channel, linked together by a central stalk and a peripheral stalk. During catalysis, ATP synthesis in the catalytic domain of F(1) is coupled via a rotary mechanism of the central stalk subunits to proton translocation. Key component of the proton channel; it may play a direct role in the translocation of protons across the membrane. This is ATP synthase subunit a from Zancudomyces culisetae (Gut fungus).